The chain runs to 276 residues: Phosphonates import ATP-binding protein PhnC (276 aa).

Residues 2–246 enclose the ABC transporter domain; it reads LEIHNLQKSY…VLTRIYGAED (245 aa). 35 to 42 is an ATP binding site; sequence GPSGAGKS.

Belongs to the ABC transporter superfamily. Phosphonates importer (TC 3.A.1.9.1) family. As to quaternary structure, the complex is composed of two ATP-binding proteins (PhnC), two transmembrane proteins (PhnE) and a solute-binding protein (PhnD).

It is found in the cell inner membrane. It catalyses the reaction phosphonate(out) + ATP + H2O = phosphonate(in) + ADP + phosphate + H(+). Part of the ABC transporter complex PhnCDE involved in phosphonates import. Responsible for energy coupling to the transport system. In Alcaligenes faecalis, this protein is Phosphonates import ATP-binding protein PhnC.